Reading from the N-terminus, the 527-residue chain is Peptide chain release factor 3 (527 aa).

Residues 9–278 (NKRRTFAIIS…GLTQWAPKPQ (270 aa)) enclose the tr-type G domain. Residues 18–25 (SHPDAGKT), 86–90 (DTPGH), and 140–143 (NKLD) each bind GTP.

This sequence belongs to the TRAFAC class translation factor GTPase superfamily. Classic translation factor GTPase family. PrfC subfamily.

It localises to the cytoplasm. Increases the formation of ribosomal termination complexes and stimulates activities of RF-1 and RF-2. It binds guanine nucleotides and has strong preference for UGA stop codons. It may interact directly with the ribosome. The stimulation of RF-1 and RF-2 is significantly reduced by GTP and GDP, but not by GMP. The chain is Peptide chain release factor 3 (prfC) from Haemophilus influenzae (strain ATCC 51907 / DSM 11121 / KW20 / Rd).